The following is a 2082-amino-acid chain: Polyketide synthase ThaQ (2082 aa).

The tract at residues 398–468 (NDARRAGSAR…DSAHDSAHAA (71 aa)) is disordered. Basic and acidic residues-rich tracts occupy residues 399–411 (DARR…RDAR), 419–430 (HGARHEAAHDAQ), and 439–468 (ADAH…AHAA). The Carrier 1 domain occupies 470-546 (ALRREGRAYL…ALLDHLLAAH (77 aa)). An O-(pantetheine 4'-phosphoryl)serine modification is found at Ser-507. Low complexity-rich tracts occupy residues 560–582 (APAR…RAAP) and 593–605 (DTPS…APAR). Residues 560-655 (APARGVGARA…RYAPRAPHPD (96 aa)) are disordered. Residues 606 to 631 (PDQPAPSGPPAQPAQPAPRADTPPPA) are compositionally biased toward pro residues. Residues 658–1077 (AEPVAIIGIS…GVNAHVVLEE (420 aa)) enclose the Ketosynthase family 3 (KS3) domain. Disordered stretches follow at residues 1250–1269 (APGT…EAAE) and 1603–1653 (ARGP…VKSD). Composition is skewed to low complexity over residues 1256 to 1269 (ASAG…EAAE) and 1612 to 1624 (SPDA…RAQA). A compositionally biased stretch (basic and acidic residues) spans 1640–1653 (ADSKAGPKSEVKSD). The Carrier 2 domain maps to 1669–1743 (ASVAASVEDA…ALVRAVAEAV (75 aa)). An O-(pantetheine 4'-phosphoryl)serine modification is found at Ser-1703. Residues 1792–2022 (PRVVLIPGLG…GAGHAVFLTH (231 aa)) form the AB hydrolase-1 domain. The segment covering 2045–2067 (GAAESVESVEATEAAEAARSPAV) has biased composition (low complexity). Positions 2045 to 2082 (GAAESVESVEATEAAEAARSPAVARRRATDDAPVGSDA) are disordered.

The cofactor is pantetheine 4'-phosphate.

It localises to the cytoplasm. It participates in antibiotic biosynthesis. Functionally, involved in production of the polyketide antibiotic thailandamide. In Burkholderia thailandensis (strain ATCC 700388 / DSM 13276 / CCUG 48851 / CIP 106301 / E264), this protein is Polyketide synthase ThaQ.